The following is a 574-amino-acid chain: Sulfate adenylyltransferase (574 aa).

The tract at residues 1–169 is N-terminal; sequence MSNPPHGGVL…VEAINKLNHY (169 aa). Residues 170 to 394 are catalytic; sequence DYVALRYTPA…LRESSRPRST (225 aa). Gln-197 contributes to the sulfate binding site. Residues 197 to 200 and 291 to 294 each bind ATP; these read QTRN and GRDH. Catalysis depends on residues Thr-198, Arg-199, and Asn-200. Residue Arg-199 coordinates sulfate. A sulfate-binding site is contributed by Ala-295. Position 333 (Val-333) interacts with ATP. Residues 395–574 form an allosteric regulation domain; adenylyl-sulfate kinase-like region; it reads QGFTIFLTGY…LETEGFFDRA (180 aa). Residues 434-437, Arg-451, 477-478, and Arg-516 contribute to the 3'-phosphoadenylyl sulfate site; these read DTVR and IA.

In the N-terminal section; belongs to the sulfate adenylyltransferase family. It in the C-terminal section; belongs to the APS kinase family. In terms of assembly, homohexamer. Dimer of trimers.

The protein localises to the cytoplasm. The enzyme catalyses sulfate + ATP + H(+) = adenosine 5'-phosphosulfate + diphosphate. Its pathway is sulfur metabolism; hydrogen sulfide biosynthesis; sulfite from sulfate: step 1/3. Allosterically inhibited by 3'-phosphoadenosine 5'-phosphosulfate (PAPS). Functionally, catalyzes the first intracellular reaction of sulfate assimilation, forming adenosine-5'-phosphosulfate (APS) from inorganic sulfate and ATP. Plays an important role in sulfate activation as a component of the biosynthesis pathway of sulfur-containing amino acids. The polypeptide is Sulfate adenylyltransferase (Aspergillus clavatus (strain ATCC 1007 / CBS 513.65 / DSM 816 / NCTC 3887 / NRRL 1 / QM 1276 / 107)).